The primary structure comprises 880 residues: uncharacterized protein (880 aa).

10 disordered regions span residues 101–149, 191–224, 240–273, 294–350, 425–446, 470–508, 536–561, 580–613, 682–713, and 844–880; these read KPIP…LRSE, PETSTPLISQSSQTSTITPSSSSTSTSTSSISTH, TTTTTTSSSSSSPPSSSIAGITNPTSRSSSPILK, NSNS…STTS, QPDSKDDESSVKSPPLPVESQP, STSTSPSSTTTTTSTTTSIIAEEPSSPILPTASPSSSSS, MESSTTTTLLSENNGGGGGSSCNDNS, APQSDSMIEQPEDDPFFDFEDLSDDDDSNDNDDE, NTNTNTNTNTNTNTNTNTNTNTNTNTNANINN, and NSSGSGNNSNDNSGSSSPSSSKTNTLNQQSICIKSEI. Positions 113-147 form a coiled coil; the sequence is ISIKEKEKEKEKEKEKEKEKEKEKEKEMKSTINLR. The segment covering 115-149 has biased composition (basic and acidic residues); the sequence is IKEKEKEKEKEKEKEKEKEKEKEKEMKSTINLRSE. Composition is skewed to low complexity over residues 193–223 and 240–256; these read TSTPLISQSSQTSTITPSSSSTSTSTSSIST and TTTTTTSSSSSSPPSSS. Residues 257-271 show a composition bias toward polar residues; sequence IAGITNPTSRSSSPI. A compositionally biased stretch (low complexity) spans 294-332; the sequence is NSNSSSGGGNNNNKSISTPSSPIISRPITNKINNNNNNN. The span at 333–342 shows a compositional bias: polar residues; sequence QPQLHYNQPQ. Positions 536-548 are enriched in low complexity; sequence MESSTTTTLLSEN. Acidic residues predominate over residues 589-613; that stretch reads QPEDDPFFDFEDLSDDDDSNDNDDE. Low complexity predominate over residues 844-864; that stretch reads NSSGSGNNSNDNSGSSSPSSS. Polar residues predominate over residues 865 to 880; the sequence is KTNTLNQQSICIKSEI.

This is an uncharacterized protein from Dictyostelium discoideum (Social amoeba).